A 201-amino-acid polypeptide reads, in one-letter code: Recombination protein RecR (201 aa).

The segment at 60–75 adopts a C4-type zinc-finger fold; the sequence is CSRCGNVDTVDPCTVC. In terms of domain architecture, Toprim spans 83 to 178; sequence SVIIVVEDVS…KITRLAHGVP (96 aa).

This sequence belongs to the RecR family.

Its function is as follows. May play a role in DNA repair. It seems to be involved in an RecBC-independent recombinational process of DNA repair. It may act with RecF and RecO. The protein is Recombination protein RecR of Rhizobium etli (strain ATCC 51251 / DSM 11541 / JCM 21823 / NBRC 15573 / CFN 42).